Reading from the N-terminus, the 151-residue chain is Ribosome maturation factor RimP (151 aa).

Belongs to the RimP family.

Its subcellular location is the cytoplasm. Required for maturation of 30S ribosomal subunits. The protein is Ribosome maturation factor RimP of Caldicellulosiruptor bescii (strain ATCC BAA-1888 / DSM 6725 / KCTC 15123 / Z-1320) (Anaerocellum thermophilum).